The sequence spans 394 residues: Elongation factor Tu (394 aa).

Residues 10-204 (KPHVNIGTIG…AVDSYIPQPV (195 aa)) enclose the tr-type G domain. Residues 19–26 (GHVDHGKT) are G1. Residue 19–26 (GHVDHGKT) coordinates GTP. Thr-26 contacts Mg(2+). Positions 60–64 (GITIS) are G2. Residues 81–84 (DCPG) form a G3 region. Residues 81–85 (DCPGH) and 136–139 (NKID) contribute to the GTP site. The tract at residues 136–139 (NKID) is G4. The tract at residues 174 to 176 (SAL) is G5.

Belongs to the TRAFAC class translation factor GTPase superfamily. Classic translation factor GTPase family. EF-Tu/EF-1A subfamily. Monomer.

It is found in the cytoplasm. The enzyme catalyses GTP + H2O = GDP + phosphate + H(+). In terms of biological role, GTP hydrolase that promotes the GTP-dependent binding of aminoacyl-tRNA to the A-site of ribosomes during protein biosynthesis. This Rickettsia rickettsii protein is Elongation factor Tu.